The chain runs to 256 residues: Enkurin (256 aa).

The tract at residues 48-92 (TMGPAKLEVPSPKDFLKKHSKEKTLPPKKKFDRHEPKKPPVPLRT) is disordered. The segment covering 61-72 (DFLKKHSKEKTL) has biased composition (basic and acidic residues). The SH3-binding motif lies at 83 to 89 (PKKPPVP). An Enkurin domain is found at 160–252 (KRNEEVKKAQ…VLEKHKIIYI (93 aa)). The IQ domain maps to 176–187 (IQENLRKAAMKR).

Microtubule inner protein component of sperm flagellar doublet microtubules. Binds calmodulin via its IQ domain. Interacts with TRPC1, TRPC2, TRPC5, but not TRPC3. Interacts with CFAP45.

The protein resides in the cytoplasm. Its subcellular location is the cytoskeleton. The protein localises to the cilium axoneme. It localises to the flagellum axoneme. Functionally, adapter that functions to localize a calcium-sensitive signal transduction machinery in sperm to a calcium-permeable ion channel. Microtubule inner protein (MIP) part of the dynein-decorated doublet microtubules (DMTs) in cilia axoneme, which is required for motile cilia beating. This Sus scrofa (Pig) protein is Enkurin (ENKUR).